The chain runs to 160 residues: MGKIELQLKATLENVTNLRPVGEDFRWYLKMKCGNCGEISEKWQYIRLMDSVALKGGRGSASMVQKCKLCSRENSIEILSSTIKSYNAEDNEKFKTIVEFECRGLEPVDFQPQAGFAAEGVESGTVFSDINLQEKDWTDYDEKAQESVGIYEVTHQFVKC.

Zn(2+) is bound by residues Cys33, Cys36, Cys67, and Cys70. Ser75 is subject to Phosphoserine.

Belongs to the UPF0587 family. Monomer.

This chain is CXXC motif containing zinc binding protein (CZIB), found in Bos taurus (Bovine).